Reading from the N-terminus, the 680-residue chain is Probable potassium transport system protein Kup (680 aa).

Helical transmembrane passes span 16 to 36 (IAGMLITMGVVYGDIGTSPLY), 60 to 80 (ISLVFWTLMLMTTVKYVLIAL), 103 to 123 (WLVIPAIIGGATLLADGMLTP), 150 to 170 (EVIILTVTILSVLFFIQKFGT), 177 to 197 (FGPIMLIWFTFIGAIGVMNLM), 222 to 242 (VGILILGSVFLATTGAEALYS), 255 to 275 (SWPYIAACLVLNYFGQGVWLL), 302 to 322 (IPAILLATVAAIIASQALISG), 351 to 371 (LYISIVNWILWAVCLAVVFYF), 380 to 400 (AYGLAITITMLMTTILLFHYL), 407 to 427 (WFLAYVVLLFFGAIETIFFIA), and 432 to 452 (FMHGGYVTVLIAFVILFIMFV).

It belongs to the HAK/KUP transporter (TC 2.A.72) family.

Its subcellular location is the cell membrane. It catalyses the reaction K(+)(in) + H(+)(in) = K(+)(out) + H(+)(out). Its function is as follows. Transport of potassium into the cell. Likely operates as a K(+):H(+) symporter. The polypeptide is Probable potassium transport system protein Kup (Latilactobacillus sakei subsp. sakei (strain 23K) (Lactobacillus sakei subsp. sakei)).